Reading from the N-terminus, the 216-residue chain is Homologous-pairing protein 2 (216 aa).

This sequence belongs to the HOP2 family. As to quaternary structure, interacts with mcp7.

It localises to the nucleus. Its function is as follows. Required for proper homologous pairing and efficient cross-over and intragenic recombination during meiosis. Acts indirectly in a process facilitating homologous recombination. Acts during mid- to late-horse-tail period. This Schizosaccharomyces pombe (strain 972 / ATCC 24843) (Fission yeast) protein is Homologous-pairing protein 2 (meu13).